A 460-amino-acid chain; its full sequence is WD repeat-containing protein 41 (460 aa).

WD repeat units follow at residues 40–79, 82–128, 131–168, 220–258, 321–359, and 403–441; these read EAHR…KLLE, GHTQ…QIQR, CFQS…LCKT, DHQD…VQAC, AHDS…QLAA, and GHSS…SGVR.

In terms of assembly, component of the C9orf72-SMCR8 complex, at least composed of C9orf72, SMCR8 and WDR41. The complex is formed of two protomers, each individually consisting of one molecule each of C9orf72, SMCR8 and WDR41. The protomers homodimerize via an interaction between C9orf72 (via C-terminus) and SMCR8 (via N-terminus). Within each protomer SMCR8 (via DENN domain) acts as a bridging protein between WDR41 (via C-terminus and N-terminus) and C9orf72 (via C-terminus). The C9orf72-SMCR8 complex associates with the ULK1/ATG1 kinase complex.

The protein localises to the cytoplasm. Functionally, non-catalytic component of the C9orf72-SMCR8 complex, a complex that has guanine nucleotide exchange factor (GEF) activity and regulates autophagy. The C9orf72-SMCR8 complex promotes the exchange of GDP to GTP, converting inactive GDP-bound RAB8A and RAB39B into their active GTP-bound form, thereby promoting autophagosome maturation. As part of the C9orf72-SMCR8 complex, stimulates RAB8A and RAB11A GTPase activity in vitro, however WDR42 is shown not be an essential complex component for this function. The C9orf72-SMCR8 complex also acts as a negative regulator of autophagy initiation by interacting with the ULK1/ATG1 kinase complex and inhibiting its protein kinase activity. This chain is WD repeat-containing protein 41, found in Mus musculus (Mouse).